Here is a 414-residue protein sequence, read N- to C-terminus: NAC domain-containing protein 35 (414 aa).

A compositionally biased stretch (polar residues) spans methionine 1–glutamate 21. The disordered stretch occupies residues methionine 1 to aspartate 47. Residues lysine 22–aspartate 47 are compositionally biased toward basic and acidic residues. The NAC domain maps to valine 51 to arginine 198. The DNA-binding element occupies isoleucine 149–histidine 204. The interval glycine 200–isoleucine 251 is disordered. Positions histidine 233–isoleucine 251 are enriched in low complexity.

Expressed in aerial organs in early stages of seedling development.

The protein localises to the nucleus. In terms of biological role, transcription factor that acts as a floral repressor. Controls flowering time by negatively regulating CONSTANS (CO) expression in a GIGANTEA (GI)-independent manner. Regulates the plant cold response by positive regulation of the cold response genes COR15A and KIN1. May coordinate cold response and flowering time. This chain is NAC domain-containing protein 35, found in Arabidopsis thaliana (Mouse-ear cress).